A 434-amino-acid polypeptide reads, in one-letter code: Isocitrate lyase (434 aa).

A substrate-binding site is contributed by 91 to 93; sequence SGW. Asp157 serves as a coordination point for Mg(2+). The active-site Proton acceptor is Cys195. Residues 196-197, Arg232, 317-321, and Thr351 each bind substrate; these read GH and NCSPS.

Belongs to the isocitrate lyase/PEP mutase superfamily. Isocitrate lyase family. In terms of assembly, homotetramer. Mg(2+) is required as a cofactor.

It catalyses the reaction D-threo-isocitrate = glyoxylate + succinate. It functions in the pathway carbohydrate metabolism; glyoxylate cycle; (S)-malate from isocitrate: step 1/2. Involved in the metabolic adaptation in response to environmental changes. Catalyzes the reversible formation of succinate and glyoxylate from isocitrate, a key step of the glyoxylate cycle, which operates as an anaplerotic route for replenishing the tricarboxylic acid cycle during growth on fatty acid substrates. In Escherichia coli O6:H1 (strain CFT073 / ATCC 700928 / UPEC), this protein is Isocitrate lyase (aceA).